The primary structure comprises 687 residues: TWiK family of potassium channels protein 12 (687 aa).

Topologically, residues 1 to 21 (MTLFQKLQWFCQLIRLRAYYK) are cytoplasmic. The chain crosses the membrane as a helical span at residues 22–42 (FLLLIAYTLFGAWLFRFYELQ). N-linked (GlcNAc...) asparagine glycans are attached at residues Asn53, Asn77, and Asn98. Residues 112-132 (WTWTGAMFYAGQLYTTIGYGY) constitute an intramembrane region (pore-forming). Residues 142–162 (ICTVLYALFGIPCFLMYLKAI) traverse the membrane as a helical segment. Residues 163–212 (GKTLSKRLKKIYKRVRRSAFGKFLLPTRVTATKDGFEDPDASAEERKRKP) lie on the Cytoplasmic side of the membrane. A helical membrane pass occupies residues 213–233 (FPIPIAIILLIIWICFSASMF). Positions 242–262 (FPSAVYFFIVSISTVGLGDML) form an intramembrane region, pore-forming. The helical transmembrane segment at 270 to 290 (VFNFLLILFGLALLSMCFELI) threads the bilayer. Residues 291-687 (TDRIAKWKQK…SKRDAPVNIV (397 aa)) are Cytoplasmic-facing. Residues 661–687 (SPSTSTSTSMIDSGYDLSKRDAPVNIV) are disordered. The span at 677–687 (LSKRDAPVNIV) shows a compositional bias: basic and acidic residues.

This sequence belongs to the two pore domain potassium channel (TC 1.A.1.8) family.

It is found in the membrane. This Caenorhabditis briggsae protein is TWiK family of potassium channels protein 12.